The chain runs to 424 residues: Histidine--tRNA ligase (424 aa).

Belongs to the class-II aminoacyl-tRNA synthetase family. In terms of assembly, homodimer.

It localises to the cytoplasm. The enzyme catalyses tRNA(His) + L-histidine + ATP = L-histidyl-tRNA(His) + AMP + diphosphate + H(+). The chain is Histidine--tRNA ligase from Desulfitobacterium hafniense (strain DSM 10664 / DCB-2).